Reading from the N-terminus, the 83-residue chain is MSVTVPNDDWTLSSLSETFDDGTQTLQGELTLALDKLAKNPSNPQLLAEYQSKLSEYTLYRNAQSNTVKVIKDVDAAIIQNFR.

The protein belongs to the SctF family. In terms of assembly, the core secretion machinery of the T3SS is composed of approximately 20 different proteins, including cytoplasmic components, a base, an export apparatus and a needle. This subunit polymerizes and forms the helical needle filament. Interacts with the needle tip protein IpaD/SctA. Interacts with the export apparatus components SpaP/SctR, SpaQ/SctS and SpaR/SctT.

The protein localises to the secreted. It is found in the cell surface. In terms of biological role, component of the type III secretion system (T3SS), also called injectisome, which is used to inject bacterial effector proteins into eukaryotic host cells. MxiH/SctF forms the external needle filament that protrudes from the bacterial surface. Functionally, during infection, can induce innate immune responses. The needle proteins interact with host TLR2 or TLR4, and induce signaling by NF-kappa-B and/or AP-1. This activation is MyD88 dependent and results in increased expression of cytokines, including TNF-alpha, IL-6 and IL-8. This chain is Type 3 secretion system needle filament protein, found in Shigella flexneri.